Reading from the N-terminus, the 216-residue chain is Type-4 uracil-DNA glycosylase (216 aa).

Residues C14 and C17 each contribute to the [4Fe-4S] cluster site. Residues G41–A43, F55, and N82 contribute to the uracil site. The [4Fe-4S] cluster site is built by C86 and C102. H164 lines the uracil pocket.

It belongs to the uracil-DNA glycosylase (UDG) superfamily. Type 4 (UDGa) family. As to quaternary structure, interacts with the sliding clamp PCNA3 subunit.

The enzyme catalyses Hydrolyzes single-stranded DNA or mismatched double-stranded DNA and polynucleotides, releasing free uracil.. Its function is as follows. Removes uracil bases that are present in DNA as a result of either deamination of cytosine or misincorporation of dUMP instead of dTMP. Can remove uracil from double-stranded DNA containing either a U/G or U/A base pair as well as from single-stranded DNA. The protein is Type-4 uracil-DNA glycosylase of Saccharolobus solfataricus (strain ATCC 35092 / DSM 1617 / JCM 11322 / P2) (Sulfolobus solfataricus).